Consider the following 199-residue polypeptide: ATP-dependent Clp protease proteolytic subunit 2 (199 aa).

Residue serine 98 is the Nucleophile of the active site. The active site involves histidine 123.

It belongs to the peptidase S14 family. Fourteen ClpP subunits assemble into 2 heptameric rings which stack back to back to give a disk-like structure with a central cavity, resembling the structure of eukaryotic proteasomes.

The protein localises to the cytoplasm. It catalyses the reaction Hydrolysis of proteins to small peptides in the presence of ATP and magnesium. alpha-casein is the usual test substrate. In the absence of ATP, only oligopeptides shorter than five residues are hydrolyzed (such as succinyl-Leu-Tyr-|-NHMec, and Leu-Tyr-Leu-|-Tyr-Trp, in which cleavage of the -Tyr-|-Leu- and -Tyr-|-Trp bonds also occurs).. Functionally, cleaves peptides in various proteins in a process that requires ATP hydrolysis. Has a chymotrypsin-like activity. Plays a major role in the degradation of misfolded proteins. This is ATP-dependent Clp protease proteolytic subunit 2 from Treponema pallidum (strain Nichols).